The primary structure comprises 390 residues: Sorting nexin C1711.11 (390 aa).

The region spanning 1-123 is the PX domain; sequence MLKCTIKNEQ…QFLENNSWKS (123 aa). 3 residues coordinate a 1,2-diacyl-sn-glycero-3-phospho-(1D-myo-inositol-3-phosphate): Arg44, Lys70, and Arg89.

It belongs to the sorting nexin family.

Its subcellular location is the cytoplasm. It localises to the membrane. The sequence is that of Sorting nexin C1711.11 from Schizosaccharomyces pombe (strain 972 / ATCC 24843) (Fission yeast).